The sequence spans 434 residues: ATP-dependent RNA helicase sub2 (434 aa).

A Q motif motif is present at residues 59–87 (TGFRDFLLKGELLRAITDCGFEHPSEVQQ). In terms of domain architecture, Helicase ATP-binding spans 90–265 (IPTAILNVDV…KKFMRNPLEV (176 aa)). 103–110 (AKSGLGKT) is a binding site for ATP. A DECD box motif is present at residues 212–215 (DECD). In terms of domain architecture, Helicase C-terminal spans 293–430 (KLNELLDSLE…EYPEEGVDSS (138 aa)).

Belongs to the DEAD box helicase family. DECD subfamily.

The protein resides in the nucleus. The catalysed reaction is ATP + H2O = ADP + phosphate + H(+). ATP-binding RNA helicase involved in transcription elongation and required for the export of mRNA out of the nucleus. SUB2 also plays a role in pre-mRNA splicing and spliceosome assembly. May be involved in rDNA and telomeric silencing, and maintenance of genome integrity. The protein is ATP-dependent RNA helicase sub2 (sub2) of Emericella nidulans (strain FGSC A4 / ATCC 38163 / CBS 112.46 / NRRL 194 / M139) (Aspergillus nidulans).